The primary structure comprises 346 residues: mRNA endoribonuclease LsoA (346 aa).

Can form a complex with cognate antitoxin LsoB and with enterobacteria phage T4 antitoxin Dmd.

Functionally, toxic component of a type II toxin-antitoxin (TA) system. A stable (half-life over 20 minutes) endoribonuclease that degrades mRNA. Degradation may be translation-stimulated. Overexpression in the absence of cognate antitoxin LsoB causes retarded growth and mRNA degradation, this effect is mitigated upon coexpression with antitoxin LsoB or enterobacteria phage T4 Dmd. Degrades late enterobacteria phage T4 mRNAs, protecting the host against T4 reproduction. The chain is mRNA endoribonuclease LsoA (lsoA) from Escherichia coli O157:H7.